The primary structure comprises 414 residues: Small ribosomal subunit protein mS46 (414 aa).

The segment covering 20–35 has biased composition (polar residues); the sequence is LNAQQQQRPFSSTTTR. Disordered regions lie at residues 20-71 and 168-229; these read LNAQ…EAAV and AGPG…DAPP. Composition is skewed to low complexity over residues 45-59 and 168-200; these read PAAA…APGP and AGPG…PFGA. The span at 205-224 shows a compositional bias: basic and acidic residues; sequence PAGDKKRSGGSGDKRPRGDD.

It belongs to the mitochondrion-specific ribosomal protein mS46 family. Component of the mitochondrial small ribosomal subunit (mt-SSU). Mature N.crassa 74S mitochondrial ribosomes consist of a small (37S) and a large (54S) subunit. The 37S small subunit contains a 16S ribosomal RNA (16S mt-rRNA) and 32 different proteins. The 54S large subunit contains a 23S rRNA (23S mt-rRNA) and 42 different proteins.

Its subcellular location is the mitochondrion. Functionally, component of the mitochondrial ribosome (mitoribosome), a dedicated translation machinery responsible for the synthesis of mitochondrial genome-encoded proteins, including at least some of the essential transmembrane subunits of the mitochondrial respiratory chain. The mitoribosomes are attached to the mitochondrial inner membrane and translation products are cotranslationally integrated into the membrane. The sequence is that of Small ribosomal subunit protein mS46 (rsm28) from Neurospora crassa (strain ATCC 24698 / 74-OR23-1A / CBS 708.71 / DSM 1257 / FGSC 987).